The chain runs to 820 residues: Serine/threonine-protein phosphatase 4 regulatory subunit 3-B (820 aa).

Residues 1–100 (MSDTRRRVKV…DEIWEKICQV (100 aa)) form the WH1 domain. The span at 682-694 (ELWFNEDDEEEGE) shows a compositional bias: acidic residues. Disordered stretches follow at residues 682-711 (ELWF…DFPE) and 750-820 (AANG…RLGS). A compositionally biased stretch (basic and acidic residues) spans 701–711 (EKTKPEDDFPE). Polar residues-rich tracts occupy residues 750–761 (AANGANSTNSKS) and 768–790 (PATS…STKG). The segment covering 798 to 809 (YPDDEDEEEEED) has biased composition (acidic residues).

The protein belongs to the SMEK family. Serine/threonine-protein phosphatase 4 (PP4) occurs in different assemblies of the catalytic and one or more regulatory subunits.

Functionally, regulatory subunit of serine/threonine-protein phosphatase 4 (PP4). The protein is Serine/threonine-protein phosphatase 4 regulatory subunit 3-B of Xenopus laevis (African clawed frog).